A 314-amino-acid polypeptide reads, in one-letter code: Thymidylate synthase (314 aa).

DUMP contacts are provided by residues arginine 21 and 176–177; that span reads RR. Cysteine 196 acts as the Nucleophile in catalysis. DUMP-binding positions include 216–219, asparagine 227, and 257–259; these read RSAD and HLY. Position 219 (aspartate 219) interacts with (6R)-5,10-methylene-5,6,7,8-tetrahydrofolate. Serine 313 provides a ligand contact to (6R)-5,10-methylene-5,6,7,8-tetrahydrofolate.

The protein belongs to the thymidylate synthase family. Bacterial-type ThyA subfamily. Homodimer.

Its subcellular location is the cytoplasm. The enzyme catalyses dUMP + (6R)-5,10-methylene-5,6,7,8-tetrahydrofolate = 7,8-dihydrofolate + dTMP. The protein operates within pyrimidine metabolism; dTTP biosynthesis. Its function is as follows. Catalyzes the reductive methylation of 2'-deoxyuridine-5'-monophosphate (dUMP) to 2'-deoxythymidine-5'-monophosphate (dTMP) while utilizing 5,10-methylenetetrahydrofolate (mTHF) as the methyl donor and reductant in the reaction, yielding dihydrofolate (DHF) as a by-product. This enzymatic reaction provides an intracellular de novo source of dTMP, an essential precursor for DNA biosynthesis. The protein is Thymidylate synthase of Listeria monocytogenes serotype 4b (strain CLIP80459).